A 226-amino-acid chain; its full sequence is Probable endolytic peptidoglycan transglycosylase RlpA (226 aa).

A signal peptide spans 1–26 (MERFLGFRTPLGALGVVILLTLILSS). Cys-27 carries the N-palmitoyl cysteine lipid modification. Residue Cys-27 is the site of S-diacylglycerol cysteine attachment.

The protein belongs to the RlpA family.

The protein localises to the cell membrane. Its function is as follows. Lytic transglycosylase with a strong preference for naked glycan strands that lack stem peptides. The protein is Probable endolytic peptidoglycan transglycosylase RlpA of Aquifex aeolicus (strain VF5).